The primary structure comprises 373 residues: Flagellar P-ring protein (373 aa).

Positions 1 to 28 (MPSVSAVILKLAAAALSALLLSGVAANA) are cleaved as a signal peptide.

The protein belongs to the FlgI family. In terms of assembly, the basal body constitutes a major portion of the flagellar organelle and consists of four rings (L,P,S, and M) mounted on a central rod.

The protein localises to the periplasm. It localises to the bacterial flagellum basal body. Its function is as follows. Assembles around the rod to form the L-ring and probably protects the motor/basal body from shearing forces during rotation. In Rhodopseudomonas palustris (strain HaA2), this protein is Flagellar P-ring protein.